Here is a 442-residue protein sequence, read N- to C-terminus: HTH-type transcriptional regulator NorG (442 aa).

The 45-residue stretch at 2–46 (KIPSHRQLAIQYNVNRVTIIKSIELLEAEGFIYTKVGSGTYVNDY) folds into the HTH gntR-type domain. The segment at residues 6–25 (HRQLAIQYNVNRVTIIKSIE) is a DNA-binding region (H-T-H motif). K288 is subject to N6-(pyridoxal phosphate)lysine.

This sequence in the C-terminal section; belongs to the class-I pyridoxal-phosphate-dependent aminotransferase family. Pyridoxal 5'-phosphate is required as a cofactor.

In terms of biological role, positively regulates the expression of the NorB efflux pump and negatively regulates the expression of the AbcA efflux pump. Binds specifically to the promoters of norA, norB and norC and abcA genes. Could also have an aminotransferase activity. The polypeptide is HTH-type transcriptional regulator NorG (norG) (Staphylococcus aureus (strain USA300)).